The sequence spans 220 residues: GTP cyclohydrolase 1 (220 aa).

Residues C109, H112, and C180 each contribute to the Zn(2+) site.

It belongs to the GTP cyclohydrolase I family. In terms of assembly, toroid-shaped homodecamer, composed of two pentamers of five dimers.

It catalyses the reaction GTP + H2O = 7,8-dihydroneopterin 3'-triphosphate + formate + H(+). It participates in cofactor biosynthesis; 7,8-dihydroneopterin triphosphate biosynthesis; 7,8-dihydroneopterin triphosphate from GTP: step 1/1. The chain is GTP cyclohydrolase 1 from Yersinia enterocolitica serotype O:8 / biotype 1B (strain NCTC 13174 / 8081).